Here is a 132-residue protein sequence, read N- to C-terminus: Outer membrane protein assembly factor BamE (132 aa).

A signal peptide spans 1-16 (MQKLVLTLLVTSLLAG). Cys17 carries N-palmitoyl cysteine lipidation. The S-diacylglycerol cysteine moiety is linked to residue Cys17.

It belongs to the BamE family. Part of the Bam complex.

The protein localises to the cell outer membrane. Part of the outer membrane protein assembly complex, which is involved in assembly and insertion of beta-barrel proteins into the outer membrane. The chain is Outer membrane protein assembly factor BamE from Acinetobacter pittii (strain PHEA-2).